Here is a 179-residue protein sequence, read N- to C-terminus: Translation initiation factor IF-3 (179 aa).

Belongs to the IF-3 family. As to quaternary structure, monomer.

Its subcellular location is the cytoplasm. In terms of biological role, IF-3 binds to the 30S ribosomal subunit and shifts the equilibrium between 70S ribosomes and their 50S and 30S subunits in favor of the free subunits, thus enhancing the availability of 30S subunits on which protein synthesis initiation begins. This Lactococcus lactis subsp. lactis (strain IL1403) (Streptococcus lactis) protein is Translation initiation factor IF-3.